The following is a 394-amino-acid chain: Obg-like ATPase 1 (394 aa).

Positions 21-285 constitute an OBG-type G domain; the sequence is LKAGIVGLAN…MSPEDAEEEL (265 aa). Residue 30-35 participates in ATP binding; it reads NVGKST. 2 residues coordinate Mg(2+): Ser-34 and Thr-55. Phosphothreonine is present on Thr-89. Residue Lys-98 forms a Glycyl lysine isopeptide (Lys-Gly) (interchain with G-Cter in ubiquitin) linkage. A phosphoserine mark is found at Ser-116 and Ser-119. Leu-233 lines the ATP pocket. Positions 306–389 constitute a TGS domain; the sequence is DLISFFTCGP…EDGDIIYFRA (84 aa).

Belongs to the TRAFAC class OBG-HflX-like GTPase superfamily. OBG GTPase family. YchF/OLA1 subfamily. Monomer. Interacts with the 26S proteasome subunit RPT6. Requires Mg(2+) as cofactor.

It is found in the cytoplasm. Its function is as follows. Hydrolyzes ATP, and can also hydrolyze GTP with lower efficiency. Has lower affinity for GTP. The chain is Obg-like ATPase 1 from Saccharomyces cerevisiae (strain ATCC 204508 / S288c) (Baker's yeast).